Consider the following 167-residue polypeptide: MQGDPEVIEFLNEQLTAELTAINQYFLHAKLQDHKGWTKLAKYTRAESFDEMRHAEVLTDRILLLDGLPNYQRLFHVRVGQSVTEMFQADREVELEAIDRLRRGIEVMRAKHDITSANVFEAILADEEHHIDYLETQLDLIEKLGESLYLSTVIEQTQPDPSGPGSL.

The region spanning 1–145 (MQGDPEVIEF…TQLDLIEKLG (145 aa)) is the Ferritin-like diiron domain. E18 and E51 together coordinate Fe cation. M52 lines the heme b pocket. Positions 54, 94, 127, and 130 each coordinate Fe cation.

It belongs to the bacterioferritin family. Homooligomer of 24 subunits, arranged as 12 dimers, that are packed together to form an approximately spherical molecule with a central cavity, in which large amounts of iron can be deposited. Heme b serves as cofactor.

The catalysed reaction is 4 Fe(2+) + O2 + 4 H(+) = 4 Fe(3+) + 2 H2O. It carries out the reaction Fe(2+)(in) = Fe(2+)(out). Its function is as follows. Iron-storage protein, whose ferroxidase center binds Fe(2+), oxidizes it using dioxygen to Fe(3+), and participates in the subsequent Fe(3+) oxide mineral core formation within the central cavity of the BFR protein shell. This chain is Bacterioferritin (bfr), found in Streptomyces coelicolor (strain ATCC BAA-471 / A3(2) / M145).